A 290-amino-acid polypeptide reads, in one-letter code: Agglutinin-2 (290 aa).

The signal sequence occupies residues Met1–Ser35. An N-linked (GlcNAc...) asparagine glycan is attached at Asn155. 2 residues coordinate Mn(2+): Glu165 and Asp167. Residues Asp167, Asn171, and Asp175 each contribute to the Ca(2+) site. Mn(2+) contacts are provided by Asp175 and His180. Asn200 carries an N-linked (GlcNAc...) asparagine glycan.

Belongs to the leguminous lectin family. As to quaternary structure, homotetramer.

Functionally, mannose/glucose binding bark lectin. In terms of biological role, bark lectins are storage proteins that probably maintain stocks of nitrogen during dormant period. Self-aggregatable molecules that can bind their own carbohydrate side chains. They could also play a role in the plant's defense against phytophagous invertebrates or herbivorous higher animals. In Cladrastis kentukea (Yellow wood), this protein is Agglutinin-2.